Reading from the N-terminus, the 385-residue chain is Isocitrate dehydrogenase [NAD] subunit beta, mitochondrial (385 aa).

The N-terminal 34 residues, 1-34 (MAALSGVRWLTRALVSAGNPGAWRGLSTSAAAHA), are a transit peptide targeting the mitochondrion. Position 199 is an N6-acetyllysine (lysine 199).

This sequence belongs to the isocitrate and isopropylmalate dehydrogenases family. In terms of assembly, heterooligomer of subunits alpha (IDH3A), beta (IDH3B), and gamma (IDH3G) in the apparent ratio of 2:1:1. The heterodimer containing one IDH3A and one IDH3B subunit and the heterodimer containing one IDH3A and one IDH3G subunit assemble into a heterotetramer (which contains two subunits of IDH3A, one of IDH3B and one of IDH3G) and further into the heterooctamer.

The protein localises to the mitochondrion. With respect to regulation, the heterotetramer and the heterodimer composed of IDH3A and IDH3G subunits can be allosterically activated by citrate (CIT) or/and ADP, and the two activators can act independently or synergistically. The heterodimer composed of IDH3A and IDH3B subunits cannot be allosterically regulated and the allosteric regulation of the heterotetramer is through the IDH3G subunit and not the IDH3B subunit. The IDH3G subunit contains the allosteric site which consists of a CIT-binding site and an ADP-binding site, and the binding of CIT and ADP causes conformational changes at the allosteric site which are transmitted to the active site in the catalytic subunit (IDH3A) through a cascade of conformational changes at the heterodimer interface, leading to stabilization of the isocitrate-binding at the active site and thus activation of the enzyme. ATP can activate the heterotetramer and the heterodimer composed of IDH3A and IDH3G subunits at low concentrations but inhibits their activities at high concentrations, whereas ATP exhibits only inhibitory effect on the heterodimer composed of IDH3A and IDH3B subunits. Functionally, plays a structural role to facilitate the assembly and ensure the full activity of the enzyme catalyzing the decarboxylation of isocitrate (ICT) into alpha-ketoglutarate. The heterodimer composed of the alpha (IDH3A) and beta (IDH3B) subunits and the heterodimer composed of the alpha (IDH3A) and gamma (IDH3G) subunits, have considerable basal activity but the full activity of the heterotetramer (containing two subunits of IDH3A, one of IDH3B and one of IDH3G) requires the assembly and cooperative function of both heterodimers. The polypeptide is Isocitrate dehydrogenase [NAD] subunit beta, mitochondrial (IDH3B) (Homo sapiens (Human)).